The following is a 59-amino-acid chain: Preprotein translocase subunit SecG (59 aa).

The Cytoplasmic portion of the chain corresponds to 1–35 (MPSSKKKKEDVPIASMAGLVRYYESEKEKVKISPK). A helical membrane pass occupies residues 36–56 (VVVVASIVLIAGVIIASFIIP). Over 57–59 (PPL) the chain is Extracellular.

This sequence belongs to the SEC61-beta family. As to quaternary structure, component of the protein translocase complex. Heterotrimer consisting of alpha (SecY), beta (SecG) and gamma (SecE) subunits. Can form oligomers of the heterotrimer.

It localises to the cell membrane. Its function is as follows. Involved in protein export. The function of the beta subunit is unknown, but it may be involved in stabilization of the trimeric complex. This is Preprotein translocase subunit SecG from Sulfolobus acidocaldarius (strain ATCC 33909 / DSM 639 / JCM 8929 / NBRC 15157 / NCIMB 11770).